The sequence spans 226 residues: Gap junction beta-2 protein (226 aa).

Residues 2–13 (DWGTLQTILGGV) lie within the membrane without spanning it. The Cytoplasmic portion of the chain corresponds to 14 to 20 (NKHSTSI). Residues 21-40 (GKIWLTVLFIFRIMILVVAA) form a helical membrane-spanning segment. Residues 41 to 73 (KEVWGDEQADFVCNTLQPGCKNVCYDHYFPISH) are Extracellular-facing. The Ca(2+) site is built by E42, G45, and E47. 3 disulfides stabilise this stretch: C53/C180, C60/C174, and C64/C169. The chain crosses the membrane as a helical span at residues 74-94 (IRLWALQLIFVSTPALLVAMH). The Cytoplasmic segment spans residues 95–135 (VAYRRHEKKRKFIKGEIKSEFKDIEEIKTQKVRIEGSLWWT). A helical transmembrane segment spans residues 136–156 (YTSSIFFRVIFEAAFMYVFYV). Residues 157–189 (MYDGFSMQRLVKCNAWPCPNTVDCFVSRPTEKT) lie on the Extracellular side of the membrane. Residues 190-210 (VFTVFMIAVSGICILLNVTEL) form a helical membrane-spanning segment. The Cytoplasmic portion of the chain corresponds to 211-226 (CYLLIRYCSGKSKKPV).

Belongs to the connexin family. Beta-type (group I) subfamily. In terms of assembly, a hemichannel or connexon is composed of a hexamer of connexins. A functional gap junction is formed by the apposition of two hemichannels. Forms heteromeric channels with GJB4. Interacts with CNST.

It is found in the cell membrane. The protein resides in the cell junction. It localises to the gap junction. Functionally, structural component of gap junctions. Gap junctions are dodecameric channels that connect the cytoplasm of adjoining cells. They are formed by the docking of two hexameric hemichannels, one from each cell membrane. Small molecules and ions diffuse from one cell to a neighboring cell via the central pore. This chain is Gap junction beta-2 protein (GJB2), found in Gorilla gorilla gorilla (Western lowland gorilla).